Reading from the N-terminus, the 254-residue chain is CDP-diacylglycerol pyrophosphatase (254 aa).

A helical membrane pass occupies residues 6–26 (YFLLALLVAILAALAGGYYWL).

It belongs to the Cdh family.

The protein localises to the cell inner membrane. The enzyme catalyses a CDP-1,2-diacyl-sn-glycerol + H2O = a 1,2-diacyl-sn-glycero-3-phosphate + CMP + 2 H(+). It functions in the pathway phospholipid metabolism; CDP-diacylglycerol degradation; phosphatidate from CDP-diacylglycerol: step 1/1. This is CDP-diacylglycerol pyrophosphatase from Klebsiella pneumoniae (strain 342).